Consider the following 220-residue polypeptide: Pyridoxine/pyridoxamine 5'-phosphate oxidase (220 aa).

Substrate contacts are provided by residues 13–16 and lysine 77; that span reads RVEY. Residues 72-77, 87-88, lysine 94, and glutamine 116 each bind FMN; these read RTVLCK and FT. The substrate site is built by tyrosine 134, arginine 138, and serine 142. FMN contacts are provided by residues 151–152 and tryptophan 197; that span reads QS. 203-205 serves as a coordination point for substrate; that stretch reads RVH. Arginine 207 serves as a coordination point for FMN.

It belongs to the pyridoxamine 5'-phosphate oxidase family. In terms of assembly, homodimer. FMN serves as cofactor.

It catalyses the reaction pyridoxamine 5'-phosphate + O2 + H2O = pyridoxal 5'-phosphate + H2O2 + NH4(+). The enzyme catalyses pyridoxine 5'-phosphate + O2 = pyridoxal 5'-phosphate + H2O2. It participates in cofactor metabolism; pyridoxal 5'-phosphate salvage; pyridoxal 5'-phosphate from pyridoxamine 5'-phosphate: step 1/1. It functions in the pathway cofactor metabolism; pyridoxal 5'-phosphate salvage; pyridoxal 5'-phosphate from pyridoxine 5'-phosphate: step 1/1. Its function is as follows. Catalyzes the oxidation of either pyridoxine 5'-phosphate (PNP) or pyridoxamine 5'-phosphate (PMP) into pyridoxal 5'-phosphate (PLP). The sequence is that of Pyridoxine/pyridoxamine 5'-phosphate oxidase from Mycobacterium sp. (strain KMS).